The following is a 517-amino-acid chain: Serine hydroxymethyltransferase 2, mitochondrial (517 aa).

Residues 1–29 (MALALRRLSSSVKKPISLLSSNGGSLRFM) constitute a mitochondrion transit peptide. Residue Ser-82 coordinates L-serine. Pemetrexed contacts are provided by residues Ser-82, Tyr-102, Glu-104, Tyr-112, 148-150 (SGS), and His-177. Glu-104 and Tyr-112 together coordinate L-serine. A methotrexate-binding site is contributed by Glu-104. A methotrexate-binding site is contributed by 184-186 (TDT). Residues Ser-232 and His-260 each coordinate pemetrexed. L-serine is bound by residues His-260 and Lys-286. N6-(pyridoxal phosphate)lysine is present on Lys-286. Position 331 (Gly-331) interacts with pemetrexed. Residue Lys-414 coordinates methotrexate. Position 430 (Arg-430) interacts with L-serine. Arg-430 serves as a coordination point for pemetrexed.

This sequence belongs to the SHMT family. In terms of assembly, homotetramer. Pyridoxal 5'-phosphate serves as cofactor. As to expression, ubiquitous. Mainly expressed in the shoot apical meristem and roots. Also detected in the leaf vasculature, especially in the protoxylem and adjacent cell layers.

It localises to the mitochondrion. It carries out the reaction (6R)-5,10-methylene-5,6,7,8-tetrahydrofolate + glycine + H2O = (6S)-5,6,7,8-tetrahydrofolate + L-serine. Its pathway is one-carbon metabolism; tetrahydrofolate interconversion. With respect to regulation, inhibited by the antifolate drugs methotrexate and pemetrexed. Functions outside the photorespiratory pathway in catalyzing the interconversion of serine and glycine with the conversion of tetrahydrofolate (THF) into 5,10-methylene-THF. This is Serine hydroxymethyltransferase 2, mitochondrial from Arabidopsis thaliana (Mouse-ear cress).